A 658-amino-acid chain; its full sequence is MKDKFELVSKYSPQGDQPRAIEQLVAGLKKGLKHQTLLGATGTGKTFTVSNVIQEVNKPTLVMAHNKTLAGQLYSEFKEFFPNNAVEYFVSYYDYYQPEAYVPQSDTYIEKDASINDEIDKLRHSATAALFERRDVIIIASVSCIYGLGSPIEYGEMLVSLRVGMEISRDQLLRKLVDIQYDRNDIDFQRGRFRVRGDVVEIFPASRDEHCMRIEFFGDEIERIREVDALTGEIIGEREHVSIFPASHFVTRPDIMKKAIVNIKAELEDRLKVLRADNKLLEAQRLEQRTNYDLEMMEEMGYCSGIENYSRHLSLRPAGVTPYTLLDYFPDDFQMVIDESHVTMPQIRGMFNGDQARKQMLVDHGFRLPSALDNRPLRLEEFEKHINQIMFISATPGPYELEKNPDVIEQIIRPTGLLDPIVEIRPIQGQIDDLMDEINDRVEKNERVLITTLTKKMSEDLTNYLKEAGVKVQYLHSEVKTLERIEIIRDLRLGVYDVIVGINLLREGIDLPEVSLVAILDADKEGFLRSERSLIQTMGRAARNENGRVIMYADKMTDSMRNSIGETERRRKIQIEYNEKHGITPKTIKKEIRGIIAATSAADEREAVKQHDLSKMSKKERDVFIEGMEHEMKEAAKALDFERAAELRDALLEIKAEG.

The region spanning 26 to 414 (AGLKKGLKHQ…PDVIEQIIRP (389 aa)) is the Helicase ATP-binding domain. ATP is bound at residue 39 to 46 (GATGTGKT). The short motif at 92–115 (YYDYYQPEAYVPQSDTYIEKDASI) is the Beta-hairpin element. The Helicase C-terminal domain occupies 430-592 (QIDDLMDEIN…ITPKTIKKEI (163 aa)). The 37-residue stretch at 622 to 658 (DVFIEGMEHEMKEAAKALDFERAAELRDALLEIKAEG) folds into the UVR domain.

This sequence belongs to the UvrB family. Forms a heterotetramer with UvrA during the search for lesions. Interacts with UvrC in an incision complex.

It localises to the cytoplasm. Its function is as follows. The UvrABC repair system catalyzes the recognition and processing of DNA lesions. A damage recognition complex composed of 2 UvrA and 2 UvrB subunits scans DNA for abnormalities. Upon binding of the UvrA(2)B(2) complex to a putative damaged site, the DNA wraps around one UvrB monomer. DNA wrap is dependent on ATP binding by UvrB and probably causes local melting of the DNA helix, facilitating insertion of UvrB beta-hairpin between the DNA strands. Then UvrB probes one DNA strand for the presence of a lesion. If a lesion is found the UvrA subunits dissociate and the UvrB-DNA preincision complex is formed. This complex is subsequently bound by UvrC and the second UvrB is released. If no lesion is found, the DNA wraps around the other UvrB subunit that will check the other stand for damage. The chain is UvrABC system protein B from Listeria monocytogenes serovar 1/2a (strain ATCC BAA-679 / EGD-e).